The primary structure comprises 120 residues: MKRILLAEDDNDMRRFLVKALEKAGYHVTHFDNGASAYERLQEEPFSLLLTDIVMPEMDGIELARRATEIDPDLKIMFITGFAAVALNPDSDAPRDAKVLSKPFHLRDLVNEIEKMLIAA.

A Response regulatory domain is found at 3–117 (RILLAEDDND…DLVNEIEKML (115 aa)). Aspartate 52 is subject to 4-aspartylphosphate.

Is phosphorylated by ChpT-P on Asp-52.

The protein localises to the cytoplasm. Component of a regulatory phosphorelay system that controls B.abortus cell growth, division, and intracellular survival inside mammalian host cells. This signaling pathway is composed of CckA, ChpT, CtrA and CpdR. CpdR is a response regulator substrate of ChpT. Unphosphorylated CpdR controls steady-state levels of CtrA in the B.abortus cell, likely via CtrA destabilization and activation of its proteolysis. This chain is Response regulator receiver protein CpdR, found in Brucella abortus (strain 2308).